A 772-amino-acid polypeptide reads, in one-letter code: Gelsolin (772 aa).

A signal peptide spans 1 to 17 (LGALVVALCALSPPARA). The propeptide occupies 18 to 33 (ATASRGAPQARAPQGR). Positions 19–38 (TASRGAPQARAPQGRVSPMR) are disordered. The segment at 41 to 166 (TMVVEHPEFL…YKKGGVASGF (126 aa)) is actin-severing. Residues 66-148 (FDLVPVPPNL…VQGFESATFL (83 aa)) form a Gelsolin-like 1 repeat. Tyr-76 carries the phosphotyrosine modification. Residues Gly-82, Asp-83, Glu-114, Asp-126, Gly-131, and Ala-133 each contribute to the Ca(2+) site. An actin-actin interfilament contact point region spans residues 113–116 (DESG). 152 to 159 (KSGLKYKK) is an a 1,2-diacyl-sn-glycero-3-phospho-(1D-myo-inositol-4,5-bisphosphate) binding site. Val-162 serves as a coordination point for Ca(2+). A 1,2-diacyl-sn-glycero-3-phospho-(1D-myo-inositol-4,5-bisphosphate) is bound at residue 178–186 (RLFQVKGRR). The stretch at 188 to 260 (VRATEVPVSW…SEEDAEPAGM (73 aa)) is one Gelsolin-like 2 repeat. Ca(2+)-binding residues include Gly-203 and Asp-204. A disulfide bridge connects residues Cys-205 and Cys-218. Glu-226, Asp-276, Glu-319, Asp-320, and Glu-344 together coordinate Ca(2+). One copy of the Gelsolin-like 3 repeat lies at 307–379 (DENPFAQGAL…LPEGGETPLF (73 aa)). 2 positions are modified to phosphotyrosine: Tyr-399 and Tyr-455. The interval 424 to 772 (AAQHGMDDDG…LDRAIAELAA (349 aa)) is actin-binding, Ca-sensitive. The Gelsolin-like 4 repeat unit spans residues 445–526 (SNKVPVDPAT…VQGKEPAHLM (82 aa)). 7 residues coordinate Ca(2+): Gly-461, Asp-462, Glu-492, Asp-504, Gly-509, Pro-511, and Thr-541. The stretch at 567-632 (RAVEVIPKAG…AEGSEPDSFW (66 aa)) is one Gelsolin-like 5 repeat. Position 574 is an N6-acetyllysine (Lys-574). Residues Asn-581 and Asp-582 each coordinate Ca(2+). Tyr-593 carries the phosphotyrosine modification. Glu-604 provides a ligand contact to Ca(2+). The residue at position 641 (Tyr-641) is a Phosphotyrosine. The Gelsolin-like 6 repeat unit spans residues 671–746 (VEEVPGELMQ…VKQGFEPPSF (76 aa)). Ca(2+) is bound by residues Asp-686, Asp-687, and Glu-709. Thr-732 carries the phosphothreonine modification.

The protein belongs to the villin/gelsolin family. As to quaternary structure, binds to actin and to fibronectin. Identified in a complex composed of ACTA1, COBL, GSN and TMSB4X. Interacts with the inactive form of EIF2AK2/PKR. Interacts with FLII. Post-translationally, phosphorylated on tyrosine residues in vitro.

The protein resides in the cytoplasm. The protein localises to the cytoskeleton. Its subcellular location is the secreted. In terms of biological role, calcium-regulated, actin-modulating protein that binds to the plus (or barbed) ends of actin monomers or filaments, preventing monomer exchange (end-blocking or capping). It can promote the assembly of monomers into filaments (nucleation) as well as sever filaments already formed. Plays a role in ciliogenesis. In Sus scrofa (Pig), this protein is Gelsolin (GSN).